We begin with the raw amino-acid sequence, 356 residues long: S-adenosylmethionine:tRNA ribosyltransferase-isomerase (356 aa).

This sequence belongs to the QueA family. As to quaternary structure, monomer.

It localises to the cytoplasm. It catalyses the reaction 7-aminomethyl-7-carbaguanosine(34) in tRNA + S-adenosyl-L-methionine = epoxyqueuosine(34) in tRNA + adenine + L-methionine + 2 H(+). The protein operates within tRNA modification; tRNA-queuosine biosynthesis. Transfers and isomerizes the ribose moiety from AdoMet to the 7-aminomethyl group of 7-deazaguanine (preQ1-tRNA) to give epoxyqueuosine (oQ-tRNA). The protein is S-adenosylmethionine:tRNA ribosyltransferase-isomerase of Chromohalobacter salexigens (strain ATCC BAA-138 / DSM 3043 / CIP 106854 / NCIMB 13768 / 1H11).